The sequence spans 211 residues: Thymidylate kinase (211 aa).

11 to 18 lines the ATP pocket; sequence GPDGAGKT.

It belongs to the thymidylate kinase family.

It catalyses the reaction dTMP + ATP = dTDP + ADP. In terms of biological role, phosphorylation of dTMP to form dTDP in both de novo and salvage pathways of dTTP synthesis. The sequence is that of Thymidylate kinase from Streptococcus pyogenes serotype M1.